The following is a 212-amino-acid chain: Probable chemoreceptor glutamine deamidase CheD (212 aa).

It belongs to the CheD family.

The catalysed reaction is L-glutaminyl-[protein] + H2O = L-glutamyl-[protein] + NH4(+). Functionally, probably deamidates glutamine residues to glutamate on methyl-accepting chemotaxis receptors (MCPs), playing an important role in chemotaxis. The chain is Probable chemoreceptor glutamine deamidase CheD from Oleidesulfovibrio alaskensis (strain ATCC BAA-1058 / DSM 17464 / G20) (Desulfovibrio alaskensis).